Here is a 131-residue protein sequence, read N- to C-terminus: Small ribosomal subunit protein uS8 (131 aa).

Belongs to the universal ribosomal protein uS8 family. In terms of assembly, part of the 30S ribosomal subunit. Contacts proteins S5 and S12.

Functionally, one of the primary rRNA binding proteins, it binds directly to 16S rRNA central domain where it helps coordinate assembly of the platform of the 30S subunit. The chain is Small ribosomal subunit protein uS8 from Hydrogenovibrio crunogenus (strain DSM 25203 / XCL-2) (Thiomicrospira crunogena).